A 282-amino-acid chain; its full sequence is 2-dehydro-3-deoxyphosphooctonate aldolase (282 aa).

Belongs to the KdsA family.

The protein resides in the cytoplasm. The enzyme catalyses D-arabinose 5-phosphate + phosphoenolpyruvate + H2O = 3-deoxy-alpha-D-manno-2-octulosonate-8-phosphate + phosphate. Its pathway is carbohydrate biosynthesis; 3-deoxy-D-manno-octulosonate biosynthesis; 3-deoxy-D-manno-octulosonate from D-ribulose 5-phosphate: step 2/3. It functions in the pathway bacterial outer membrane biogenesis; lipopolysaccharide biosynthesis. This is 2-dehydro-3-deoxyphosphooctonate aldolase from Shewanella sp. (strain ANA-3).